The chain runs to 322 residues: CPX chromosomal region candidate gene 1 protein homolog (322 aa).

Composition is skewed to polar residues over residues 1–23 (MTSS…NETP) and 37–78 (TNIS…TQND). The segment at 1–83 (MTSSNQGNDP…MTQNDPPDEE (83 aa)) is disordered.

This Mus musculus (Mouse) protein is CPX chromosomal region candidate gene 1 protein homolog (Cpxcr1).